Here is a 471-residue protein sequence, read N- to C-terminus: Cysteine--tRNA ligase (471 aa).

Cys-29 is a Zn(2+) binding site. A 'HIGH' region motif is present at residues 31 to 41 (PTVYNYIHIGN). Positions 209, 234, and 238 each coordinate Zn(2+). The short motif at 266-270 (KMSKS) is the 'KMSKS' region element. Position 269 (Lys-269) interacts with ATP.

This sequence belongs to the class-I aminoacyl-tRNA synthetase family. As to quaternary structure, monomer. It depends on Zn(2+) as a cofactor.

It is found in the cytoplasm. The catalysed reaction is tRNA(Cys) + L-cysteine + ATP = L-cysteinyl-tRNA(Cys) + AMP + diphosphate. The polypeptide is Cysteine--tRNA ligase (Listeria innocua serovar 6a (strain ATCC BAA-680 / CLIP 11262)).